The chain runs to 156 residues: Transcriptional repressor NrdR (156 aa).

A zinc finger lies at 3 to 34 (CPFCQHGHSRVIDSRVIEAGSAIRRRRECSQC). The region spanning 46–136 (LLVLKRNGVT…VYKSFESADD (91 aa)) is the ATP-cone domain.

Belongs to the NrdR family. Requires Zn(2+) as cofactor.

Functionally, negatively regulates transcription of bacterial ribonucleotide reductase nrd genes and operons by binding to NrdR-boxes. The protein is Transcriptional repressor NrdR of Corynebacterium efficiens (strain DSM 44549 / YS-314 / AJ 12310 / JCM 11189 / NBRC 100395).